We begin with the raw amino-acid sequence, 708 residues long: Radial spoke head protein 6 homolog A (708 aa).

Disordered stretches follow at residues M1–P94, E376–K407, E495–N514, and G663–D708. Polar residues predominate over residues P10–L32. Over residues R47–Q56 the composition is skewed to low complexity. Acidic residues predominate over residues E495–G504. Over residues L680–A690 the composition is skewed to low complexity. Residues A691–D708 show a composition bias toward acidic residues.

It belongs to the flagellar radial spoke RSP4/6 family. As to quaternary structure, component of the axonemal radial spoke 1 (RS1) and 2 (RS2) complexes, at least composed of spoke head proteins RSPH1, RSPH3, RSPH9 and the cilia-specific component RSPH4A or sperm-specific component RSPH6A, spoke stalk proteins RSPH14, DNAJB13, DYDC1, ROPN1L and NME5, and the RS1 complex-specific anchor protein IQUB. Interacts with RSPH1. Interacts with RSPH3B. Interacts with RSPH4A. Interacts with RSPH9. Interacts with RSPH10B. Phosphorylated by PKA. Phosphorylation increases in capacitated sperm. Expressed in sperm and testis (at protein level).

Its subcellular location is the cytoplasm. The protein resides in the cytoskeleton. It localises to the flagellum axoneme. In terms of biological role, functions as part of radial spoke complexes in the axoneme of sperm flagella that play an important part in motility. The triple radial spokes (RS1, RS2 and RS3) are required to modulate beating of the sperm flagellum. This is Radial spoke head protein 6 homolog A from Mus musculus (Mouse).